Consider the following 211-residue polypeptide: Guanylate kinase (211 aa).

Positions 5–184 constitute a Guanylate kinase-like domain; sequence GLLIVFSGPS…AAERVKRIIE (180 aa). An ATP-binding site is contributed by 12–19; the sequence is GPSGVGKG.

Belongs to the guanylate kinase family.

The protein resides in the cytoplasm. It carries out the reaction GMP + ATP = GDP + ADP. Its function is as follows. Essential for recycling GMP and indirectly, cGMP. The chain is Guanylate kinase from Streptococcus pyogenes serotype M3 (strain SSI-1).